We begin with the raw amino-acid sequence, 224 residues long: Ribose-5-phosphate isomerase A (224 aa).

Substrate-binding positions include 32-35 (TGST), 85-88 (DGAD), and 98-101 (KGGG). Residue Glu107 is the Proton acceptor of the active site. Residue Lys125 coordinates substrate.

Belongs to the ribose 5-phosphate isomerase family. As to quaternary structure, homodimer.

The enzyme catalyses aldehydo-D-ribose 5-phosphate = D-ribulose 5-phosphate. It participates in carbohydrate degradation; pentose phosphate pathway; D-ribose 5-phosphate from D-ribulose 5-phosphate (non-oxidative stage): step 1/1. In terms of biological role, catalyzes the reversible conversion of ribose-5-phosphate to ribulose 5-phosphate. This chain is Ribose-5-phosphate isomerase A, found in Pseudomonas putida (strain ATCC 700007 / DSM 6899 / JCM 31910 / BCRC 17059 / LMG 24140 / F1).